A 305-amino-acid chain; its full sequence is MSKKLTFQEIILTLQQFWNDQGCMLMQAYDNEKGAGTMSPYTFLRAIGPEPWNAAYVEPSRRPADGRYGENPNRLYQHHQFQVVMKPSPSNIQELYLQSLELLGINPLEHDIRFVEDNWENPSTGSAGLGWEVWLDGMEITQFTYFQQVGGLPTQPVTAEVTYGLERLASYIQEVDSVYDIEWADGVKYGEIFTHPEYEHSKYSFEVSDQDLLLGNFERFEAEAKRCLDEHLVHPAYDYVLKCSHTFNLLDARGAVSVTERAGYIARIRNLARVVAKTFVAERKRLGYPLLDAETREKLLAEEGE.

This sequence belongs to the class-II aminoacyl-tRNA synthetase family. Tetramer of two alpha and two beta subunits.

It localises to the cytoplasm. The enzyme catalyses tRNA(Gly) + glycine + ATP = glycyl-tRNA(Gly) + AMP + diphosphate. In Streptococcus gordonii (strain Challis / ATCC 35105 / BCRC 15272 / CH1 / DL1 / V288), this protein is Glycine--tRNA ligase alpha subunit.